The chain runs to 787 residues: LPS-assembly protein LptD (787 aa).

Positions 1-39 (MPPKTLFPLVPACDAAPRKKRLAVALLAVPGLVPAVSQA) are cleaved as a signal peptide.

It belongs to the LptD family. Component of the lipopolysaccharide transport and assembly complex. Interacts with LptE and LptA.

The protein localises to the cell outer membrane. Its function is as follows. Together with LptE, is involved in the assembly of lipopolysaccharide (LPS) at the surface of the outer membrane. This chain is LPS-assembly protein LptD, found in Burkholderia pseudomallei (strain 1710b).